The sequence spans 448 residues: StAR-related lipid transfer protein 3 (448 aa).

The MENTAL domain maps to 47–219 (FSDVRRTFCL…YSPPESLAGS (173 aa)). Transmembrane regions (helical) follow at residues 53 to 73 (TFCL…IIEL), 96 to 116 (FFDI…GYAA), 122 to 142 (WWVI…KVIL), and 150 to 170 (AFGY…TWFL). An FFAT motif is present at residues 208-214 (QFYSPPE). The 214-residue stretch at 232 to 445 (AVTEQEKAFV…LRQRINEVHV (214 aa)) folds into the START domain.

This sequence belongs to the STARD3 family. In terms of assembly, homodimer. In terms of processing, phosphorylated. Phosphorylation allows the tethering of two membranes that participates in the formation of ER-endosome contacts. Phosphorylation of FFAT motif drives membrane tethering between the endoplasmic reticulum and late endosomes that in turn allows the efficient transport of sterol mediated by the START domain.

The protein localises to the late endosome membrane. It carries out the reaction cholesterol(in) = cholesterol(out). Functionally, sterol-binding protein that mediates cholesterol transport from the endoplasmic reticulum to endosomes. The sterol transport mechanism is triggered by phosphorylation of FFAT motif that leads to membrane tethering between the endoplasmic reticulum and late endosomes. Acts as a lipid transfer protein that redirects sterol to the endosome at the expense of the cell membrane and favors membrane formation inside endosomes. The sequence is that of StAR-related lipid transfer protein 3 from Danio rerio (Zebrafish).